A 428-amino-acid chain; its full sequence is Glutamyl-tRNA reductase (428 aa).

Substrate contacts are provided by residues 49–52, Ser-109, 114–116, and Gln-120; these read TCNR and EGQ. Cys-50 acts as the Nucleophile in catalysis. 189-194 contributes to the NADP(+) binding site; the sequence is GAGKMS.

The protein belongs to the glutamyl-tRNA reductase family. As to quaternary structure, homodimer.

It catalyses the reaction (S)-4-amino-5-oxopentanoate + tRNA(Glu) + NADP(+) = L-glutamyl-tRNA(Glu) + NADPH + H(+). It functions in the pathway porphyrin-containing compound metabolism; protoporphyrin-IX biosynthesis; 5-aminolevulinate from L-glutamyl-tRNA(Glu): step 1/2. The protein operates within porphyrin-containing compound metabolism; chlorophyll biosynthesis. Catalyzes the NADPH-dependent reduction of glutamyl-tRNA(Glu) to glutamate 1-semialdehyde (GSA). The chain is Glutamyl-tRNA reductase from Gloeothece citriformis (strain PCC 7424) (Cyanothece sp. (strain PCC 7424)).